We begin with the raw amino-acid sequence, 213 residues long: LexA repressor (213 aa).

Residues Gln27–Glu47 constitute a DNA-binding region (H-T-H motif). Catalysis depends on for autocatalytic cleavage activity residues Ser133 and Lys170.

It belongs to the peptidase S24 family. Homodimer.

The enzyme catalyses Hydrolysis of Ala-|-Gly bond in repressor LexA.. In terms of biological role, represses a number of genes involved in the response to DNA damage (SOS response), including recA and lexA. In the presence of single-stranded DNA, RecA interacts with LexA causing an autocatalytic cleavage which disrupts the DNA-binding part of LexA, leading to derepression of the SOS regulon and eventually DNA repair. In Xanthomonas campestris, this protein is LexA repressor.